Here is a 492-residue protein sequence, read N- to C-terminus: Steroid 21-hydroxylase (492 aa).

Arg-91 and Lys-120 together coordinate heme b. Arg-231 is a binding site for 17alpha-hydroxyprogesterone. Residue Arg-231 participates in progesterone binding. Residues His-363, Arg-424, and Cys-426 each coordinate heme b.

This sequence belongs to the cytochrome P450 family. Heme b serves as cofactor.

The protein localises to the endoplasmic reticulum membrane. The protein resides in the microsome membrane. The catalysed reaction is 17alpha-hydroxyprogesterone + reduced [NADPH--hemoprotein reductase] + O2 = 11-deoxycortisol + oxidized [NADPH--hemoprotein reductase] + H2O + H(+). It catalyses the reaction progesterone + reduced [NADPH--hemoprotein reductase] + O2 = 21-hydroxyprogesterone + oxidized [NADPH--hemoprotein reductase] + H2O + H(+). Its function is as follows. Specifically catalyzes the 21-hydroxylation of steroids. Required for the adrenal synthesis of mineralocorticoids and glucocorticoids. This chain is Steroid 21-hydroxylase (CYP21), found in Felis catus (Cat).